Consider the following 122-residue polypeptide: Large ribosomal subunit protein uL14 (122 aa).

This sequence belongs to the universal ribosomal protein uL14 family. Part of the 50S ribosomal subunit. Forms a cluster with proteins L3 and L19. In the 70S ribosome, L14 and L19 interact and together make contacts with the 16S rRNA in bridges B5 and B8.

Its function is as follows. Binds to 23S rRNA. Forms part of two intersubunit bridges in the 70S ribosome. The polypeptide is Large ribosomal subunit protein uL14 (Hahella chejuensis (strain KCTC 2396)).